We begin with the raw amino-acid sequence, 132 residues long: Fatty acid-binding protein 12 (132 aa).

A fatty acid-binding positions include arginine 107 and 127 to 129; that span reads RTY.

The protein belongs to the calycin superfamily. Fatty-acid binding protein (FABP) family. As to expression, highly expressed in adult retina and testis.

May play a role in lipid transport. The protein is Fatty acid-binding protein 12 (Fabp12) of Mus musculus (Mouse).